Here is a 228-residue protein sequence, read N- to C-terminus: MPRYYCDYCDTYLTHDSPSVRKQHNAGYKHKANVRTYYQQFEEQQTQSLIDQRIKEHLGQAAAFQAGAPFNQHMLAFPGAVARPRLPILPTPGMPHGFPQAPLMPGVRPPILPAPGVPGYPGAPPTMPQPGAPPGSMPQPGAPPGSMPQPGAPPGSMPMQMAPLPRPPTLPPPTSGVPGAPIPNSAAPPAIYQANPPAPAGPTSGAPPAPPTAPQPAFSYALPSEGNH.

A Matrin-type zinc finger spans residues 4–36 (YYCDYCDTYLTHDSPSVRKQHNAGYKHKANVRT). The interval 105 to 228 (PGVRPPILPA…SYALPSEGNH (124 aa)) is disordered. Pro residues-rich tracts occupy residues 107–156 (VRPP…PPGS) and 164–175 (LPRPPTLPPPTS). Residues 178-190 (PGAPIPNSAAPPA) are compositionally biased toward low complexity. Positions 196–214 (PPAPAGPTSGAPPAPPTAP) are enriched in pro residues.

The protein belongs to the U1 small nuclear ribonucleoprotein C family. In terms of assembly, U1 snRNP is composed of the 7 core Sm proteins B/B', D1, D2, D3, E, F and G that assemble in a heptameric protein ring on the Sm site of the small nuclear RNA to form the core snRNP, and at least 3 U1 snRNP-specific proteins U1-70K, U1-A and U1-C. U1-C interacts with U1 snRNA and the 5' splice-site region of the pre-mRNA.

Its subcellular location is the nucleus. In terms of biological role, component of the spliceosomal U1 snRNP, which is essential for recognition of the pre-mRNA 5' splice-site and the subsequent assembly of the spliceosome. U1-C is directly involved in initial 5' splice-site recognition for both constitutive and regulated alternative splicing. The interaction with the 5' splice-site seems to precede base-pairing between the pre-mRNA and the U1 snRNA. Stimulates commitment or early (E) complex formation by stabilizing the base pairing of the 5' end of the U1 snRNA and the 5' splice-site region. This Sorghum bicolor (Sorghum) protein is U1 small nuclear ribonucleoprotein C-2.